Reading from the N-terminus, the 348-residue chain is 5-deoxyribose 1-phosphate isomerase (348 aa).

Residues 49 to 51, arginine 92, and glutamine 199 contribute to the substrate site; that span reads RGA. Aspartate 240 (proton donor) is an active-site residue. 250 to 251 contacts substrate; that stretch reads NK.

Belongs to the EIF-2B alpha/beta/delta subunits family. DrdI subfamily. Homodimer.

The catalysed reaction is 5-deoxy-alpha-D-ribose 1-phosphate = 5-deoxy-D-ribulose 1-phosphate. It catalyses the reaction 5-(methylsulfanyl)-alpha-D-ribose 1-phosphate = 5-(methylsulfanyl)-D-ribulose 1-phosphate. It participates in carbohydrate degradation. Functionally, catalyzes the isomerization of 5-deoxy-alpha-D-ribose 1-phosphate to 5-deoxy-D-ribulose 1-phosphate, as part of a 5-deoxyribose salvage pathway that recycles this toxic radical SAM enzyme by-product to mainstream metabolites. Also seems to be able to catalyze the conversion of methylthioribose-1-phosphate (MTR-1-P) into methylthioribulose-1-phosphate (MTRu-1-P). However this enzyme may not function in methionine salvage in B.thuringiensis since it exists a paralog (MtnA) present in the methionine salvage pathway cluster. The polypeptide is 5-deoxyribose 1-phosphate isomerase (Bacillus thuringiensis serovar kurstaki (strain ATCC 35866 / NRRL B-4488 / HD73)).